A 57-amino-acid chain; its full sequence is Non-structural protein 3a (57 aa).

The N-terminal stretch at 1 to 22 (MIQSPTSFLIVLILLWCKLVLS) is a signal peptide.

Involved in resistance to IFN. The sequence is that of Non-structural protein 3a from Avian infectious bronchitis virus (strain Portugal/322/82) (IBV).